A 130-amino-acid polypeptide reads, in one-letter code: Large ribosomal subunit protein bL17 (130 aa).

The protein belongs to the bacterial ribosomal protein bL17 family. Part of the 50S ribosomal subunit. Contacts protein L32.

The protein is Large ribosomal subunit protein bL17 of Shewanella pealeana (strain ATCC 700345 / ANG-SQ1).